The chain runs to 307 residues: Probable 2-methylisocitrate lyase 2 (307 aa).

53–55 (SGA) is a substrate binding site. Residues aspartate 92 and aspartate 94 each contribute to the Mg(2+) site. Substrate is bound by residues 129–130 (CG), arginine 164, glutamate 194, 216–218 (NMT), arginine 247, and arginine 276.

Belongs to the isocitrate lyase/PEP mutase superfamily. Methylisocitrate lyase family. As to quaternary structure, homotetramer; dimer of dimers. The cofactor is Mg(2+).

It catalyses the reaction (2S,3R)-3-hydroxybutane-1,2,3-tricarboxylate = pyruvate + succinate. Its pathway is organic acid metabolism; propanoate degradation. In terms of biological role, involved in the catabolism of short chain fatty acids (SCFA) via the 2-methylcitrate cycle I (propionate degradation route). Catalyzes the thermodynamically favored C-C bond cleavage of (2R,3S)-2-methylisocitrate to yield pyruvate and succinate via an alpha-carboxy-carbanion intermediate. The sequence is that of Probable 2-methylisocitrate lyase 2 from Corynebacterium glutamicum (strain ATCC 13032 / DSM 20300 / JCM 1318 / BCRC 11384 / CCUG 27702 / LMG 3730 / NBRC 12168 / NCIMB 10025 / NRRL B-2784 / 534).